The primary structure comprises 419 residues: Serine hydroxymethyltransferase 2 (419 aa).

(6S)-5,6,7,8-tetrahydrofolate-binding positions include L120 and 124–126 (GHL). At K229 the chain carries N6-(pyridoxal phosphate)lysine.

It belongs to the SHMT family. Homodimer. Pyridoxal 5'-phosphate serves as cofactor.

The protein localises to the cytoplasm. It carries out the reaction (6R)-5,10-methylene-5,6,7,8-tetrahydrofolate + glycine + H2O = (6S)-5,6,7,8-tetrahydrofolate + L-serine. The protein operates within one-carbon metabolism; tetrahydrofolate interconversion. It participates in amino-acid biosynthesis; glycine biosynthesis; glycine from L-serine: step 1/1. In terms of biological role, catalyzes the reversible interconversion of serine and glycine with tetrahydrofolate (THF) serving as the one-carbon carrier. This reaction serves as the major source of one-carbon groups required for the biosynthesis of purines, thymidylate, methionine, and other important biomolecules. Also exhibits THF-independent aldolase activity toward beta-hydroxyamino acids, producing glycine and aldehydes, via a retro-aldol mechanism. This is Serine hydroxymethyltransferase 2 from Salmonella typhi.